A 304-amino-acid chain; its full sequence is Glutaminase (304 aa).

Substrate-binding residues include Ser-63, Asn-114, Glu-158, Asn-165, Tyr-189, Tyr-240, and Val-258.

The protein belongs to the glutaminase family. Homotetramer.

It carries out the reaction L-glutamine + H2O = L-glutamate + NH4(+). The chain is Glutaminase from Shewanella baltica (strain OS185).